The sequence spans 380 residues: Cobalt-precorrin-5B C(1)-methyltransferase (380 aa).

This sequence belongs to the CbiD family.

The catalysed reaction is Co-precorrin-5B + S-adenosyl-L-methionine = Co-precorrin-6A + S-adenosyl-L-homocysteine. It participates in cofactor biosynthesis; adenosylcobalamin biosynthesis; cob(II)yrinate a,c-diamide from sirohydrochlorin (anaerobic route): step 6/10. Catalyzes the methylation of C-1 in cobalt-precorrin-5B to form cobalt-precorrin-6A. The polypeptide is Cobalt-precorrin-5B C(1)-methyltransferase (Salinispora tropica (strain ATCC BAA-916 / DSM 44818 / JCM 13857 / NBRC 105044 / CNB-440)).